Here is a 332-residue protein sequence, read N- to C-terminus: SLAM family member 6 (332 aa).

Residues 1 to 21 (MLWLFQSLLFVFCFGPGNVVS) form the signal peptide. At 22 to 226 (QSSLTPLMVN…VKIQYTDTKM (205 aa)) the chain is on the extracellular side. The Ig-like V-type domain occupies 35–120 (GESVTLPLEF…ISTKTSAKLS (86 aa)). 7 N-linked (GlcNAc...) asparagine glycosylation sites follow: N58, N87, N137, N144, N161, N178, and N203. The region spanning 132-209 (NIQVTNHSQL…AVSNLSFSVS (78 aa)) is the Ig-like C2-type domain. 2 disulfides stabilise this stretch: C147/C214 and C153/C195. The chain crosses the membrane as a helical span at residues 227-247 (ILFMVSGICIVFGFIILLLLV). The Cytoplasmic portion of the chain corresponds to 248–331 (LRKRRDSLSL…FSRATALDNV (84 aa)). At Y274 the chain carries Phosphotyrosine. The residue at position 278 (S278) is a Phosphoserine. 2 short sequence motifs (ITSM) span residues 283 to 288 (TVYASV) and 307 to 312 (TIYSTI). The residue at position 309 (Y309) is a Phosphotyrosine.

In terms of assembly, homodimer. Interacts with PTN6. Interacts (phosphorylated) with PTN11. Interacts (phosphorylated on tyrosine residues) with SH2D1A/SAP and SH2D1B/EAT2; SH2D1A and SH2D1B can associate with the same SLAMF6 molecule; interaction with SH2D1B is mediated by ITSM 2. Post-translationally, phosphorylation in NK cells upon engagment by SLAMF6-expressing target cells is leading to receptor activation. In terms of tissue distribution, expressed by all (resting and activated) natural killer cells (NK), T- and B-lymphocytes. Increased surface expression on T-cells of systemic lupus erythematosus (SLE) patients.

It is found in the cell membrane. In terms of biological role, self-ligand receptor of the signaling lymphocytic activation molecule (SLAM) family. SLAM receptors triggered by homo- or heterotypic cell-cell interactions are modulating the activation and differentiation of a wide variety of immune cells and thus are involved in the regulation and interconnection of both innate and adaptive immune response. Activities are controlled by presence or absence of small cytoplasmic adapter proteins, SH2D1A/SAP and/or SH2D1B/EAT-2. Triggers cytolytic activity only in natural killer cells (NK) expressing high surface densities of natural cytotoxicity receptors. Positive signaling in NK cells implicates phosphorylation of VAV1. NK cell activation seems to depend on SH2D1B and not on SH2D1A. In conjunction with SLAMF1 controls the transition between positive selection and the subsequent expansion and differentiation of the thymocytic natural killer T (NKT) cell lineage. Promotes T-cell differentiation into a helper T-cell Th17 phenotype leading to increased IL-17 secretion; the costimulatory activity requires SH2D1A. Promotes recruitment of RORC to the IL-17 promoter. In conjunction with SLAMF1 and CD84/SLAMF5 may be a negative regulator of the humoral immune response. In the absence of SH2D1A/SAP can transmit negative signals to CD4(+) T-cells and NKT cells. Negatively regulates germinal center formation by inhibiting T-cell:B-cell adhesion; the function probably implicates increased association with PTPN6/SHP-1 via ITSMs in absence of SH2D1A/SAP. However, reported to be involved in maintaining B-cell tolerance in germinal centers and in preventing autoimmunity. This is SLAM family member 6 (SLAMF6) from Homo sapiens (Human).